The following is a 498-amino-acid chain: ATP synthase subunit beta, chloroplastic (498 aa).

172 to 179 (GGAGVGKT) serves as a coordination point for ATP.

This sequence belongs to the ATPase alpha/beta chains family. In terms of assembly, F-type ATPases have 2 components, CF(1) - the catalytic core - and CF(0) - the membrane proton channel. CF(1) has five subunits: alpha(3), beta(3), gamma(1), delta(1), epsilon(1). CF(0) has four main subunits: a(1), b(1), b'(1) and c(9-12).

Its subcellular location is the plastid. The protein resides in the chloroplast thylakoid membrane. It carries out the reaction ATP + H2O + 4 H(+)(in) = ADP + phosphate + 5 H(+)(out). In terms of biological role, produces ATP from ADP in the presence of a proton gradient across the membrane. The catalytic sites are hosted primarily by the beta subunits. This is ATP synthase subunit beta, chloroplastic from Montinia caryophyllacea (Wild clove bush).